The following is a 200-amino-acid chain: Glycerol-3-phosphate acyltransferase (200 aa).

Helical transmembrane passes span 2-22 (FNIS…AVIV), 51-71 (KAAA…VLLA), 84-104 (AIAA…FFGF), 114-134 (LGVL…IWLV), and 159-179 (FFMP…LVLF).

Belongs to the PlsY family. Probably interacts with PlsX.

Its subcellular location is the cell inner membrane. The enzyme catalyses an acyl phosphate + sn-glycerol 3-phosphate = a 1-acyl-sn-glycero-3-phosphate + phosphate. The protein operates within lipid metabolism; phospholipid metabolism. Catalyzes the transfer of an acyl group from acyl-phosphate (acyl-PO(4)) to glycerol-3-phosphate (G3P) to form lysophosphatidic acid (LPA). This enzyme utilizes acyl-phosphate as fatty acyl donor, but not acyl-CoA or acyl-ACP. The sequence is that of Glycerol-3-phosphate acyltransferase from Neisseria meningitidis serogroup C (strain 053442).